The chain runs to 252 residues: MKNLFKGLMMSLSMFTIIPMPYVEWDEDGAKNMMKCYPIIGLIVGCVWFLGYKLINYLNISIVLKSALIMIIPFIITGMLHLDGFMDVCDAILSRRDKEEKLRILKDSTTGAFSVISVIILFFIQFGAVHSFLEYNKNPYILMFLPIISRNIVAYFFITIITIKESTLGSYFTKGTNIKDKVILILELALVCILFGIILGYIGIVILLIVTVAISLCVKKCINEFGGISGDVAGFSLVVGELVGLFSACLFT.

7 consecutive transmembrane segments (helical) span residues 4–24, 38–58, 60–80, 113–133, 141–161, 190–210, and 232–252; these read LFKGLMMSLSMFTIIPMPYVE, PIIGLIVGCVWFLGYKLINYL, ISIVLKSALIMIIPFIITGML, FSVISVIILFFIQFGAVHSFL, ILMFLPIISRNIVAYFFITII, LVCILFGIILGYIGIVILLIV, and VAGFSLVVGELVGLFSACLFT.

The protein belongs to the CobS family. Mg(2+) serves as cofactor.

The protein resides in the cell membrane. The catalysed reaction is alpha-ribazole + adenosylcob(III)inamide-GDP = adenosylcob(III)alamin + GMP + H(+). It catalyses the reaction alpha-ribazole 5'-phosphate + adenosylcob(III)inamide-GDP = adenosylcob(III)alamin 5'-phosphate + GMP + H(+). It participates in cofactor biosynthesis; adenosylcobalamin biosynthesis; adenosylcobalamin from cob(II)yrinate a,c-diamide: step 7/7. Joins adenosylcobinamide-GDP and alpha-ribazole to generate adenosylcobalamin (Ado-cobalamin). Also synthesizes adenosylcobalamin 5'-phosphate from adenosylcobinamide-GDP and alpha-ribazole 5'-phosphate. This is Adenosylcobinamide-GDP ribazoletransferase from Clostridium botulinum (strain Eklund 17B / Type B).